Consider the following 210-residue polypeptide: Uracil phosphoribosyltransferase (210 aa).

5-phospho-alpha-D-ribose 1-diphosphate-binding positions include Arg78, Arg103, and 130–138; that span reads DPMLATGGT. Uracil-binding positions include Ile193 and 198-200; that span reads GDA. Asp199 is a binding site for 5-phospho-alpha-D-ribose 1-diphosphate.

Belongs to the UPRTase family. Mg(2+) serves as cofactor.

It carries out the reaction UMP + diphosphate = 5-phospho-alpha-D-ribose 1-diphosphate + uracil. It participates in pyrimidine metabolism; UMP biosynthesis via salvage pathway; UMP from uracil: step 1/1. Its activity is regulated as follows. Allosterically activated by GTP. Catalyzes the conversion of uracil and 5-phospho-alpha-D-ribose 1-diphosphate (PRPP) to UMP and diphosphate. The chain is Uracil phosphoribosyltransferase from Xanthomonas euvesicatoria pv. vesicatoria (strain 85-10) (Xanthomonas campestris pv. vesicatoria).